The following is a 102-amino-acid chain: MAAQKIRIRLKAFDYRLIDQSALEIVETAKRTGAVVKGPVPLPTRIERFDILRSPHVNKTSRDQFEIRTHQRLMDIVDPTDKTVDALMKLDLPAGVDVEIKL.

It belongs to the universal ribosomal protein uS10 family. Part of the 30S ribosomal subunit.

In terms of biological role, involved in the binding of tRNA to the ribosomes. The polypeptide is Small ribosomal subunit protein uS10 (Methylobacillus flagellatus (strain ATCC 51484 / DSM 6875 / VKM B-1610 / KT)).